A 435-amino-acid chain; its full sequence is ATP-dependent Clp protease ATP-binding subunit ClpX 3 (435 aa).

Residues 1-53 (MSSDPPAKTQHCSFCGIEQGRDTPLIAGIEGQICEACVRLAEQVVANWGRKRS) enclose the ClpX-type ZB domain. 4 residues coordinate Zn(2+): C12, C15, C34, and C37. Residue 125 to 132 (PTGTGKTL) participates in ATP binding.

The protein belongs to the ClpX chaperone family. Component of the ClpX-ClpP complex. Forms a hexameric ring that, in the presence of ATP, binds to fourteen ClpP subunits assembled into a disk-like structure with a central cavity, resembling the structure of eukaryotic proteasomes.

In terms of biological role, ATP-dependent specificity component of the Clp protease. It directs the protease to specific substrates. Can perform chaperone functions in the absence of ClpP. This chain is ATP-dependent Clp protease ATP-binding subunit ClpX 3, found in Methylococcus capsulatus (strain ATCC 33009 / NCIMB 11132 / Bath).